Reading from the N-terminus, the 239-residue chain is MKDDVLKQQAHAAIQKKLGYAFRDISLLRQALTHRSHHAKHNERFEFVGDSILNYTVARMLFDAFPKLTEGELSRLRASLVNEGVLAEMAAEMNVGDGLYLGAGELKSGGFRRPSILADAMEAMFAAVSFDADFNTAEKVVRHLFADRVRRADFQNQAKDGKTALQEALQARRFALPKYRIEEQIGYANDSMFVISCDLGELGFVCRAKGTSRKAAEQEAAKEALKWLEEKLPLKRKKK.

In terms of domain architecture, RNase III spans 11–133; sequence HAAIQKKLGY…MFAAVSFDAD (123 aa). Glu46 lines the Mg(2+) pocket. Residue Asp50 is part of the active site. The Mg(2+) site is built by Asp119 and Glu122. Positions 160 to 230 constitute a DRBM domain; the sequence is DGKTALQEAL…AKEALKWLEE (71 aa).

It belongs to the ribonuclease III family. In terms of assembly, homodimer. Mg(2+) serves as cofactor.

The protein localises to the cytoplasm. It carries out the reaction Endonucleolytic cleavage to 5'-phosphomonoester.. Functionally, digests double-stranded RNA. Involved in the processing of primary rRNA transcript to yield the immediate precursors to the large and small rRNAs (23S and 16S). Also processes some mRNAs, and tRNAs when they are encoded in the rRNA operon. CRISPR (clustered regularly interspaced short palindromic repeat) is an adaptive immune system that provides protection against mobile genetic elements (viruses, transposable elements and conjugative plasmids). CRISPR clusters contain spacers, sequences complementary to antecedent mobile elements, and target invading nucleic acids. CRISPR clusters are transcribed and processed into CRISPR RNA (crRNA). In this organism endogenous ribonuclease 3 and Cas9 are required for correct coprocessing of pre-crRNA and the trans-encoded small RNA (tracrRNA). Cas9, crRNA and tracRNA are required for cleavage of invading DNA. Involved in 3'-end processing but not 5'-end processing of crRNA and tracrRNA. The polypeptide is Ribonuclease 3 (Neisseria meningitidis serogroup C (strain 8013)).